Here is a 95-residue protein sequence, read N- to C-terminus: Protein TusB (95 aa).

Belongs to the DsrH/TusB family. Heterohexamer, formed by a dimer of trimers. The hexameric TusBCD complex contains 2 copies each of TusB, TusC and TusD. The TusBCD complex interacts with TusE.

It localises to the cytoplasm. Functionally, part of a sulfur-relay system required for 2-thiolation of 5-methylaminomethyl-2-thiouridine (mnm(5)s(2)U) at tRNA wobble positions. The protein is Protein TusB of Shigella flexneri.